The primary structure comprises 295 residues: Probable lipid kinase YegS-like (295 aa).

Residues 1–129 enclose the DAGKc domain; that stretch reads MQGRKAMLVL…IDLGQAGDQL (129 aa). Residues threonine 39, 65–71, and threonine 92 contribute to the ATP site; that span reads GDGTLRD. Residues methionine 210, aspartate 213, and leucine 215 each coordinate Mg(2+). Glutamate 264 functions as the Proton acceptor in the catalytic mechanism.

Belongs to the diacylglycerol/lipid kinase family. YegS lipid kinase subfamily. Requires Mg(2+) as cofactor. Ca(2+) serves as cofactor.

It localises to the cytoplasm. Functionally, probably phosphorylates lipids; the in vivo substrate is unknown. The protein is Probable lipid kinase YegS-like of Pseudomonas putida (strain ATCC 47054 / DSM 6125 / CFBP 8728 / NCIMB 11950 / KT2440).